The primary structure comprises 264 residues: Methionine aminopeptidase (264 aa).

Position 79 (His-79) interacts with substrate. 3 residues coordinate a divalent metal cation: Asp-97, Asp-108, and His-171. His-178 lines the substrate pocket. A divalent metal cation contacts are provided by Glu-204 and Glu-235.

The protein belongs to the peptidase M24A family. Methionine aminopeptidase type 1 subfamily. Monomer. Co(2+) is required as a cofactor. The cofactor is Zn(2+). Requires Mn(2+) as cofactor. It depends on Fe(2+) as a cofactor.

It catalyses the reaction Release of N-terminal amino acids, preferentially methionine, from peptides and arylamides.. Removes the N-terminal methionine from nascent proteins. The N-terminal methionine is often cleaved when the second residue in the primary sequence is small and uncharged (Met-Ala-, Cys, Gly, Pro, Ser, Thr, or Val). Requires deformylation of the N(alpha)-formylated initiator methionine before it can be hydrolyzed. The polypeptide is Methionine aminopeptidase (Escherichia coli O157:H7).